Consider the following 461-residue polypeptide: tRNA-2-methylthio-N(6)-dimethylallyladenosine synthase (461 aa).

The region spanning 25 to 143 (PTYSIITHGC…LPYLIDRHLS (119 aa)) is the MTTase N-terminal domain. [4Fe-4S] cluster contacts are provided by Cys34, Cys70, Cys104, Cys179, Cys183, and Cys186. Positions 165–395 (RDNEYVGYVN…LDVAYPIFYE (231 aa)) constitute a Radical SAM core domain. In terms of domain architecture, TRAM spans 398–461 (KSYLGTIQEV…SFALTGEMVD (64 aa)).

The protein belongs to the methylthiotransferase family. MiaB subfamily. Monomer. It depends on [4Fe-4S] cluster as a cofactor.

It localises to the cytoplasm. It carries out the reaction N(6)-dimethylallyladenosine(37) in tRNA + (sulfur carrier)-SH + AH2 + 2 S-adenosyl-L-methionine = 2-methylsulfanyl-N(6)-dimethylallyladenosine(37) in tRNA + (sulfur carrier)-H + 5'-deoxyadenosine + L-methionine + A + S-adenosyl-L-homocysteine + 2 H(+). Functionally, catalyzes the methylthiolation of N6-(dimethylallyl)adenosine (i(6)A), leading to the formation of 2-methylthio-N6-(dimethylallyl)adenosine (ms(2)i(6)A) at position 37 in tRNAs that read codons beginning with uridine. This chain is tRNA-2-methylthio-N(6)-dimethylallyladenosine synthase, found in Finegoldia magna (strain ATCC 29328 / DSM 20472 / WAL 2508) (Peptostreptococcus magnus).